The sequence spans 108 residues: RNA silencing suppressor (108 aa).

The segment at 47 to 50 (RRRR) is basic. Residues 57 to 78 (CHRCYRLWPPTVFTTRCDNKHC) form a C4-type zinc finger.

The protein belongs to the carlaviruses nucleic acid-binding protein family.

Suppressor of viral-induced RNA silencing. Increases the accumulation of viral RNA and enhances viral cell-to-cell movement by inhibiting RNA silencing. The protein is RNA silencing suppressor of Solanum tuberosum (Potato).